A 426-amino-acid chain; its full sequence is Zinc finger CCCH domain-containing protein 15 (426 aa).

Residues 1–12 (MPPKKQAQAGGS) show a composition bias toward low complexity. 2 disordered regions span residues 1-30 (MPPKKQAQAGGSKKAEQKKKEKIIEDKTFG) and 53-74 (GQQNPRQVAQSEAEKKLKKDDK). Basic and acidic residues predominate over residues 13–29 (KKAEQKKKEKIIEDKTF). A compositionally biased stretch (polar residues) spans 53 to 62 (GQQNPRQVAQ). A coiled-coil region spans residues 61–86 (AQSEAEKKLKKDDKKKELQELNELFK). A compositionally biased stretch (basic and acidic residues) spans 64-74 (EAEKKLKKDDK). 2 consecutive C3H1-type zinc fingers follow at residues 99 to 126 (DPKSVVCAFFKQGQCTKGDKCKFSHDLT) and 174 to 212 (PKTQIVCKHFLEAIENNKYGWFWVCPGGGDICMYRHALP). A coiled-coil region spans residues 218–285 (KKDKKKEEKE…RRKADFKAGK (68 aa)). Ser-231 carries the phosphoserine modification. Residues 236–260 (IERERSALGPNVTKITLESFLAWKK) form a required for interaction with DRG1 region. Residues 299–326 (PELVNDDDEEADDTRYTQGTGGDEVDDS) are disordered. Phosphoserine occurs at positions 351, 360, and 381. A disordered region spans residues 358–411 (YTSDKDENKLSEASGGRAENGERSDLEEDNEREGTENGAIDAVPVDENLFTGED).

The protein belongs to the ZC3H15/TMA46 family. Interacts with DRG1; this interaction prevents DRG1 poly-ubiquitination and degradation by proteasome. DRG1-ZC3H15/DFRP1 complex co-sediments with polysomes. Associates with microtubules.

It is found in the cytoplasm. Its subcellular location is the nucleus. In terms of biological role, protects DRG1 from proteolytic degradation. Stimulates DRG1 GTPase activity likely by increasing the affinity for the potassium ions. This Homo sapiens (Human) protein is Zinc finger CCCH domain-containing protein 15 (ZC3H15).